The primary structure comprises 82 residues: Cytochrome b559 subunit alpha (82 aa).

Residues 22 to 36 (IIHAVTLPAIFIAGF) form a helical membrane-spanning segment. Heme is bound at residue His-24.

This sequence belongs to the PsbE/PsbF family. Heterodimer of an alpha subunit and a beta subunit. PSII is composed of 1 copy each of membrane proteins PsbA, PsbB, PsbC, PsbD, PsbE, PsbF, PsbH, PsbI, PsbJ, PsbK, PsbL, PsbM, PsbT, PsbX, PsbY, Psb30/Ycf12, peripheral proteins PsbO, CyanoQ (PsbQ), PsbU, PsbV and a large number of cofactors. It forms dimeric complexes. The cofactor is heme b.

It localises to the cellular thylakoid membrane. Its function is as follows. This b-type cytochrome is tightly associated with the reaction center of photosystem II (PSII). PSII is a light-driven water:plastoquinone oxidoreductase that uses light energy to abstract electrons from H(2)O, generating O(2) and a proton gradient subsequently used for ATP formation. It consists of a core antenna complex that captures photons, and an electron transfer chain that converts photonic excitation into a charge separation. This is Cytochrome b559 subunit alpha from Prochlorococcus marinus (strain SARG / CCMP1375 / SS120).